Here is a 456-residue protein sequence, read N- to C-terminus: Bacteriochlorophyllide d C-12(1)-methyltransferase (456 aa).

The region spanning H178 to E405 is the Radical SAM core domain. Residues C194, C198, and C201 each contribute to the [4Fe-4S] cluster site.

It belongs to the radical SAM superfamily. [4Fe-4S] cluster serves as cofactor.

Its subcellular location is the cytoplasm. It catalyses the reaction 8-ethyl-12-methyl-3-vinylbacteriochlorophyllide d + S-adenosyl-L-methionine = 8,12-diethyl-3-vinylbacteriochlorophyllide d + S-adenosyl-L-homocysteine + H(+). The protein operates within porphyrin-containing compound metabolism; bacteriochlorophyll biosynthesis (light-independent). Involved in the biosynthesis of the major light-harvesting pigment bacteriochlorophyll c (BChlc), which confers a significant competitive advantage to green sulfur bacteria living at limiting red and near-infrared light intensities. BchR is a methyltransferase that adds a single methyl group to the methyl carbon at the C-12(1) position of 8-ethyl-12-methyl-3-vinylbacteriochlorophyllide d to yield 8,12-diethyl-3-vinylbacteriochlorophyllide d. In Chlorobaculum tepidum (strain ATCC 49652 / DSM 12025 / NBRC 103806 / TLS) (Chlorobium tepidum), this protein is Bacteriochlorophyllide d C-12(1)-methyltransferase.